Reading from the N-terminus, the 295-residue chain is 33 kDa chaperonin (295 aa).

2 disulfides stabilise this stretch: Cys237–Cys239 and Cys270–Cys273.

It belongs to the HSP33 family. Under oxidizing conditions two disulfide bonds are formed involving the reactive cysteines. Under reducing conditions zinc is bound to the reactive cysteines and the protein is inactive.

The protein resides in the cytoplasm. Functionally, redox regulated molecular chaperone. Protects both thermally unfolding and oxidatively damaged proteins from irreversible aggregation. Plays an important role in the bacterial defense system toward oxidative stress. This chain is 33 kDa chaperonin, found in Geobacillus sp. (strain WCH70).